Here is a 477-residue protein sequence, read N- to C-terminus: Stromelysin-3 (477 aa).

Positions 1–17 (MHLLILLPALCVLGAHS) are cleaved as a signal peptide. Residues 18-85 (APLSYTYLQH…SSSGRNRQKR (68 aa)) constitute a propeptide, activation peptide. Residues 64 to 83 (RCGVPDIPAPPDSSSGRNRQ) are disordered. Zn(2+) is bound by residues C65, H152, and D154. Residues D159, G160, G162, and I164 each contribute to the Ca(2+) site. Residues H167, H180, and H203 each coordinate Zn(2+). E204 is an active-site residue. H207 and H213 together coordinate Zn(2+). C279 and C466 are joined by a disulfide. Hemopexin repeat units lie at residues 280-324 (KTNF…WRGI), 325-369 (PDTV…GISV), 370-418 (TQIQ…WRGV), and 419-466 (PKGI…FFNC).

It belongs to the peptidase M10A family. Ca(2+) serves as cofactor. Requires Zn(2+) as cofactor. Expressed in fibroblast cells that are activated by thyroid hormone. High levels in resorbing tail.

It is found in the secreted. It localises to the extracellular space. Its subcellular location is the extracellular matrix. Functionally, may be involved in the modification of the extracellular matrix during metamorphic apoptosis. The chain is Stromelysin-3 (mmp11) from Xenopus laevis (African clawed frog).